We begin with the raw amino-acid sequence, 224 residues long: Probable GTP-binding protein EngB (224 aa).

In terms of domain architecture, EngB-type G spans V31–P204. GTP-binding positions include G39–S46, G65–L69, D83–G86, T150–D153, and F183–S185. 2 residues coordinate Mg(2+): S46 and T67.

The protein belongs to the TRAFAC class TrmE-Era-EngA-EngB-Septin-like GTPase superfamily. EngB GTPase family. Mg(2+) is required as a cofactor.

Necessary for normal cell division and for the maintenance of normal septation. In Shewanella piezotolerans (strain WP3 / JCM 13877), this protein is Probable GTP-binding protein EngB.